The chain runs to 915 residues: WD repeat-containing protein 44 (915 aa).

A compositionally biased stretch (acidic residues) spans 1 to 14 (MASESDTEEFYDAP). A disordered region spans residues 1 to 24 (MASESDTEEFYDAPEDVHLGTGYP). Alanine 2 is modified (N-acetylalanine). The binding activity stretch occupies residues 2–173 (ASESDTEEFY…SSGEQLDASG (172 aa)). A Phosphoserine modification is found at serine 3. An FFAT-like motif motif is present at residues 9 to 15 (EFYDAPE). Tyrosine 11 carries the post-translational modification Phosphotyrosine. Serine 27, serine 50, serine 66, serine 71, serine 81, and serine 126 each carry phosphoserine. Disordered regions lie at residues 79–102 (DDSL…VAGT), 117–174 (LQQD…ASGL), and 208–282 (VEEV…PKEN). Residues 114-139 (EHELQQDSEKAESQNVAEESELETQK) are a coiled coil. The span at 146–155 (TCEKSEKTVD) shows a compositional bias: basic and acidic residues. 2 positions are modified to phosphothreonine: threonine 161 and threonine 221. Positions 213–259 (PAKPPRHLTPEPDIVASTKKPVPARPPPPTNFPPPRPPPPSRPAPPP) are important for interaction with ARHGAP26 AND ARHGAP10. Pro residues predominate over residues 235–258 (PARPPPPTNFPPPRPPPPSRPAPP). Serine 264 carries the post-translational modification Phosphoserine. Basic and acidic residues predominate over residues 264-280 (SELEFEALKTPDLDVPK). Threonine 273 carries the phosphothreonine modification. The segment at 336–349 (VMGPQRPRSNSGRE) is important for interaction with RAB11A. 2 positions are modified to phosphoserine: serine 344 and serine 346. 2 positions are modified to phosphothreonine: threonine 351 and threonine 403. Disordered regions lie at residues 399-425 (SNDA…RLKQ) and 461-481 (DEVF…GMPY). A phosphoserine mark is found at serine 405, serine 472, serine 473, and serine 474. Residues 469-478 (DDPSSSDDEG) are compositionally biased toward acidic residues. At tyrosine 481 the chain carries Phosphotyrosine. The WD 1 repeat unit spans residues 511-550 (EHMGAVWTMKFSHCGRLLASAGQDNIVRIWALKNAFDYFN). The segment at 559–593 (EGRVSPSPSQESLSSSKSDTDMGVCSGTDEDPDDK) is disordered. 2 positions are modified to phosphoserine: serine 563 and serine 567. Residues 563–575 (SPSPSQESLSSSK) are compositionally biased toward low complexity. WD repeat units follow at residues 607–645 (GHTA…CLCC), 647–687 (QHID…VALW), 692–731 (GQTK…YHTQ), 742–781 (KVGR…LSMK), 786–825 (VNSS…SKFT), 840–880 (AHNA…EVLD), and 882–915 (TSTG…KTVS).

In terms of assembly, interacts with the GTP-bound form of RAB11 when membrane-associated. Interacts with GRAF1/ARHGAP26 or GRAF2/ARHGAP10; the interaction connects the endoplasmic reticulum (ER) with the endosomal tubule. Interacts (via FFAT-like motif) with VAPA (via MSP domain) or VAPB (via MSP domain); the interaction connects the ER with the endosomal tubule. Does not bind to other Rab and Rho small G proteins. Post-translationally, phosphorylated by ATK1; the phosphorylation stabilizes its interaction with RAB11A and RAB11B.

The protein localises to the cytoplasm. It is found in the cytosol. Its subcellular location is the perinuclear region. The protein resides in the endosome membrane. It localises to the golgi apparatus. The protein localises to the trans-Golgi network. Functionally, downstream effector for Rab11 which regulates Rab11 intracellular membrane trafficking functions such as endocytic recycling, intracellular ciliogenesis and protein export. ATK1-mediated phosphorylation of WDR44 induces binding to Rab11 which activates endocytic recycling of transferrin receptor back to the plasma membrane. When bound to Rab11, prevents the formation of the ciliogenic Rab11-Rabin8/RAB3IP-RAB11FIP3 complex, therefore inhibiting preciliary trafficking and ciliogenesis. Participates in neo-synthesized protein export by connecting the endoplasmic reticulum (ER) with the endosomal tubule via direct interactions with the integral ER proteins VAPA or VAPB and the endosomal protein GRAFs (GRAF1/ARHGAP26 or GRAF2/ARHGAP10), which facilitates the transfer of proteins such as E-cadherin, MPP14 and CFTR into a Rab8-Rab10-Rab11-dependent export route. This is WD repeat-containing protein 44 from Mus musculus (Mouse).